The primary structure comprises 295 residues: Sulfotransferase 1A1 (295 aa).

Position 48-53 (48-53 (KSGTTW)) interacts with 3'-phosphoadenylyl sulfate. 106 to 108 (KTH) contributes to the substrate binding site. Catalysis depends on H108, which acts as the Proton acceptor. 3'-phosphoadenylyl sulfate-binding positions include R130, S138, Y193, 227-232 (TSFKEM), and 255-259 (FMRKG). At S138 the chain carries Phosphoserine.

It belongs to the sulfotransferase 1 family. As to quaternary structure, homodimer. As to expression, liver, lung, adrenal, brain, platelets and skin.

The protein resides in the cytoplasm. The enzyme catalyses a phenol + 3'-phosphoadenylyl sulfate = an aryl sulfate + adenosine 3',5'-bisphosphate + H(+). It carries out the reaction 17beta-estradiol + 3'-phosphoadenylyl sulfate = 17beta-estradiol 3-sulfate + adenosine 3',5'-bisphosphate + H(+). It catalyses the reaction 4-ethylphenol + 3'-phosphoadenylyl sulfate = 4-ethylphenyl sulfate + adenosine 3',5'-bisphosphate + H(+). The catalysed reaction is 4-nitrophenol + 3'-phosphoadenylyl sulfate = 4-nitrophenyl sulfate + adenosine 3',5'-bisphosphate. The enzyme catalyses dopamine + 3'-phosphoadenylyl sulfate = dopamine 3-O-sulfate + adenosine 3',5'-bisphosphate + H(+). It carries out the reaction dopamine + 3'-phosphoadenylyl sulfate = dopamine 4-O-sulfate + adenosine 3',5'-bisphosphate + H(+). It catalyses the reaction 3,3',5-triiodo-L-thyronine + 3'-phosphoadenylyl sulfate = 3,3',5-triiodo-L-thyronine sulfate + adenosine 3',5'-bisphosphate + H(+). The catalysed reaction is 3,3',5'-triiodo-L-thyronine + 3'-phosphoadenylyl sulfate = 3,3',5'-triiodo-L-thyronine sulfate + adenosine 3',5'-bisphosphate + H(+). The enzyme catalyses 3,3'-diiodo-L-thyronine + 3'-phosphoadenylyl sulfate = 3,3'-diiodo-L-thyronine sulfate + adenosine 3',5'-bisphosphate + H(+). It carries out the reaction L-thyroxine + 3'-phosphoadenylyl sulfate = L-thyroxine sulfate + adenosine 3',5'-bisphosphate + H(+). In terms of biological role, sulfotransferase that utilizes 3'-phospho-5'-adenylyl sulfate (PAPS) as sulfonate donor to catalyze the sulfate conjugation of a wide variety of acceptor molecules bearing a hydroxyl or an amine group. Sulfonation increases the water solubility of most compounds, and therefore their renal excretion, but it can also result in bioactivation to form active metabolites. Displays broad substrate specificity for small phenolic compounds. Plays an important role in the sulfonation of endogenous molecules such as steroid hormones. Mediates the sulfate conjugation of a variety of xenobiotics, including the drugs acetaminophen and minoxidil. Mediates also the metabolic activation of carcinogenic N-hydroxyarylamines leading to highly reactive intermediates capable of forming DNA adducts, potentially resulting in mutagenesis. May play a role in gut microbiota-host metabolic interaction. O-sulfonates 4-ethylphenol (4-EP), a dietary tyrosine-derived metabolite produced by gut bacteria. The product 4-EPS crosses the blood-brain barrier and may negatively regulate oligodendrocyte maturation and myelination, affecting the functional connectivity of different brain regions associated with the limbic system. Catalyzes the sulfate conjugation of dopamine. Catalyzes the sulfation of T4 (L-thyroxine/3,5,3',5'-tetraiodothyronine), T3 (3,5,3'-triiodothyronine), rT3 (3,3',5'-triiodothyronine) and 3,3'-T2 (3,3'-diiodothyronine), with a substrate preference of 3,3'-T2 &gt; rT3 &gt; T3 &gt; T4. The polypeptide is Sulfotransferase 1A1 (SULT1A1) (Homo sapiens (Human)).